The primary structure comprises 2343 residues: Pecanex-like protein 1 (2343 aa).

The next 2 membrane-spanning stretches (helical) occupy residues 33–53 and 57–77; these read ALHLYLWLFLLGLPFTLYMAL and MIIVAVYCPVVAAVFIVLKMV. Disordered regions lie at residues 98-163, 271-290, 306-691, and 749-826; these read FTDQ…GSSR, SHSYRKEHRPRGVPRTSSSA, QQQR…TRAR, and TRSR…QGQQ. Residues 143 to 163 are compositionally biased toward polar residues; the sequence is SSRNSYAGLDPSNQIGSGSSR. Residues 272-282 are compositionally biased toward basic residues; the sequence is HSYRKEHRPRG. The segment covering 372 to 390 has biased composition (low complexity); sequence SLRSLSTRSSGSTESYCSG. A compositionally biased stretch (polar residues) spans 396–412; it reads NSTLSSYKSEQTSSTHI. Composition is skewed to basic and acidic residues over residues 416–457, 507–521, and 530–546; these read LSEH…DKTA, RPPEQSAESKEEQGE, and KVCKDDGGKQKEGDVRP. Positions 556–571 are enriched in basic residues; the sequence is TSAHKPGRRRTGKKRA. 3 stretches are compositionally biased toward low complexity: residues 624-637, 769-780, and 809-826; these read SDSSSSATSHSCQS, AATGAAQASEEA, and TLLIGPPLSLQDGQQGQQ. Transmembrane regions (helical) follow at residues 978–998, 1009–1029, 1034–1054, 1068–1088, 1118–1138, 1162–1182, 1195–1215, 1268–1288, 1296–1316, 1406–1426, 1434–1454, 1458–1478, and 1493–1513; these read FWILPQLWIGINFDRLTLLAL, ILAVVLAILVAFLGSILLIQG, IWVFQFCLVIASCQYSLLKSV, IIAYSRPVYFCLCCGLIWLLD, LVIVFTLCFPIVFFIGLLPQV, LLAALYSFLCSVVAVALLYGL, HIPVLFSVFCGLLVAVSYHLS, LVVCVVIGVLYFAIHVSTVFT, YVLYALVGFVGLVTHYVLPQV, SFSSPTYQYITVIFTVLFFKF, TMLLDLFFMSILFSKLWELLY, FVYTYVAPWQITWGSAFHAFA, and AVVSALFSTPLNPFLGSAIFI. Positions 2050 to 2120 are disordered; it reads EDSDTGGGTS…VQSSLVRQSP (71 aa). 2 stretches are compositionally biased toward polar residues: residues 2060-2080 and 2094-2117; these read CPANSATTASDPHNSVPQGST and PTTSYPPTLGTSHSAHSVQSSLVR.

This sequence belongs to the pecanex family. In terms of tissue distribution, specifically expressed in the germ line and not in the somatic cells of the testis, reaching its peak at the pachytene stage of the meiotic prophase. Detected in pachytene spermatocytes and round spermatids (at protein level).

It is found in the membrane. In Rattus norvegicus (Rat), this protein is Pecanex-like protein 1.